The following is a 230-amino-acid chain: Cytidylate kinase (230 aa).

12 to 20 (GPSGAGKGT) contributes to the ATP binding site.

It belongs to the cytidylate kinase family. Type 1 subfamily.

Its subcellular location is the cytoplasm. The enzyme catalyses CMP + ATP = CDP + ADP. It carries out the reaction dCMP + ATP = dCDP + ADP. This is Cytidylate kinase from Shewanella pealeana (strain ATCC 700345 / ANG-SQ1).